A 534-amino-acid polypeptide reads, in one-letter code: CTP synthase (534 aa).

An amidoligase domain region spans residues methionine 1–leucine 269. Serine 17 contributes to the CTP binding site. Serine 17 is a binding site for UTP. Serine 18–valine 23 is a binding site for ATP. Tyrosine 58 contacts L-glutamine. Aspartate 75 serves as a coordination point for ATP. Residues aspartate 75 and glutamate 143 each coordinate Mg(2+). Residues aspartate 150–glutamate 152, lysine 190–glutamine 195, and lysine 226 contribute to the CTP site. UTP is bound by residues lysine 190–glutamine 195 and lysine 226. The Glutamine amidotransferase type-1 domain occupies aspartate 294–glutamate 532. Glycine 352 serves as a coordination point for L-glutamine. Catalysis depends on cysteine 379, which acts as the Nucleophile; for glutamine hydrolysis. L-glutamine-binding positions include leucine 380–glutamine 383, glutamate 403, and arginine 460. Residues histidine 505 and glutamate 507 contribute to the active site.

This sequence belongs to the CTP synthase family. As to quaternary structure, homotetramer.

The catalysed reaction is UTP + L-glutamine + ATP + H2O = CTP + L-glutamate + ADP + phosphate + 2 H(+). It carries out the reaction L-glutamine + H2O = L-glutamate + NH4(+). It catalyses the reaction UTP + NH4(+) + ATP = CTP + ADP + phosphate + 2 H(+). It participates in pyrimidine metabolism; CTP biosynthesis via de novo pathway; CTP from UDP: step 2/2. Its activity is regulated as follows. Allosterically activated by GTP, when glutamine is the substrate; GTP has no effect on the reaction when ammonia is the substrate. The allosteric effector GTP functions by stabilizing the protein conformation that binds the tetrahedral intermediate(s) formed during glutamine hydrolysis. Inhibited by the product CTP, via allosteric rather than competitive inhibition. Its function is as follows. Catalyzes the ATP-dependent amination of UTP to CTP with either L-glutamine or ammonia as the source of nitrogen. Regulates intracellular CTP levels through interactions with the four ribonucleotide triphosphates. This chain is CTP synthase, found in Hydrogenobaculum sp. (strain Y04AAS1).